The chain runs to 394 residues: Obg-like ATPase 1 (394 aa).

Positions 21–285 (LKAGIVGLAN…MSPEDAEEEL (265 aa)) constitute an OBG-type G domain. Position 30 to 35 (30 to 35 (NVGKST)) interacts with ATP. Residues S34 and T55 each contribute to the Mg(2+) site. Residue T89 is modified to Phosphothreonine. K98 is covalently cross-linked (Glycyl lysine isopeptide (Lys-Gly) (interchain with G-Cter in ubiquitin)). Phosphoserine occurs at positions 116 and 119. L233 provides a ligand contact to ATP. The TGS domain occupies 306 to 389 (DLISFFTCGP…EDGDIIYFRA (84 aa)).

This sequence belongs to the TRAFAC class OBG-HflX-like GTPase superfamily. OBG GTPase family. YchF/OLA1 subfamily. In terms of assembly, monomer. Interacts with the 26S proteasome subunit RPT6. Requires Mg(2+) as cofactor.

The protein resides in the cytoplasm. In terms of biological role, hydrolyzes ATP, and can also hydrolyze GTP with lower efficiency. Has lower affinity for GTP. This is Obg-like ATPase 1 from Saccharomyces cerevisiae (strain ATCC 204508 / S288c) (Baker's yeast).